The sequence spans 410 residues: Multifunctional CCA protein (410 aa).

The ATP site is built by glycine 8 and arginine 11. The CTP site is built by glycine 8 and arginine 11. Aspartate 21 and aspartate 23 together coordinate Mg(2+). The ATP site is built by arginine 91, arginine 138, and arginine 141. CTP-binding residues include arginine 91, arginine 138, and arginine 141. The HD domain occupies 229–347; sequence TGIHQEMVSD…AQLALVCEAD (119 aa).

The protein belongs to the tRNA nucleotidyltransferase/poly(A) polymerase family. Bacterial CCA-adding enzyme type 1 subfamily. Monomer. Can also form homodimers and oligomers. Mg(2+) serves as cofactor. It depends on Ni(2+) as a cofactor.

It catalyses the reaction a tRNA precursor + 2 CTP + ATP = a tRNA with a 3' CCA end + 3 diphosphate. The enzyme catalyses a tRNA with a 3' CCA end + 2 CTP + ATP = a tRNA with a 3' CCACCA end + 3 diphosphate. In terms of biological role, catalyzes the addition and repair of the essential 3'-terminal CCA sequence in tRNAs without using a nucleic acid template. Adds these three nucleotides in the order of C, C, and A to the tRNA nucleotide-73, using CTP and ATP as substrates and producing inorganic pyrophosphate. tRNA 3'-terminal CCA addition is required both for tRNA processing and repair. Also involved in tRNA surveillance by mediating tandem CCA addition to generate a CCACCA at the 3' terminus of unstable tRNAs. While stable tRNAs receive only 3'-terminal CCA, unstable tRNAs are marked with CCACCA and rapidly degraded. In Xanthomonas oryzae pv. oryzae (strain MAFF 311018), this protein is Multifunctional CCA protein.